The primary structure comprises 288 residues: Borealin (288 aa).

The segment at 1–58 is required for interaction with INCENP; the sequence is MAPKKRSSRGTRTNTLRSRKLASFLKDFDREVQVRTKQIESDRQTLLKEVENLYNIEV. Positions 1–88 are required for centromere localization; the sequence is MAPKKRSSRG…NRQALEEAAT (88 aa). The segment at 1 to 149 is required for interaction with SENP3; that stretch reads MAPKKRSSRG…RKSHKNLRSA (149 aa). Positions 10–109 are required to form a minimal CPC core complex that localizes to the central spindle and midbody and properly executes the role of the CPC during cytokinesis; the sequence is GTRTNTLRSR…TAEAIQTPLK (100 aa). The required for interaction with INCENP and BIRC5 stretch occupies residues 20-78; sequence KLASFLKDFDREVQVRTKQIESDRQTLLKEVENLYNIEVLRLPKALQVMKWLDYFALGG. Thr-88 is subject to Phosphothreonine; by TTK. Residue Arg-91 is modified to Citrulline. The residue at position 94 (Thr-94) is a Phosphothreonine; by TTK. A Phosphothreonine modification is found at Thr-106. Ser-110 is modified (phosphoserine). A compositionally biased stretch (acidic residues) spans 124–134; that stretch reads KEEEEDEEEEG. The segment at 124 to 173 is disordered; that stretch reads KEEEEDEEEEGGGGGGRKSHKNLRSARVKRCPPSKKRTQSIQGRSRSKRL. Over residues 140–161 the composition is skewed to basic residues; that stretch reads RKSHKNLRSARVKRCPPSKKRT. Lys-144 is covalently cross-linked (Glycyl lysine isopeptide (Lys-Gly) (interchain with G-Cter in SUMO2)). Position 174 is a phosphoserine; by AURKB (Ser-174). Phosphothreonine is present on residues Thr-197 and Thr-212. Residues Ser-227, Ser-232, Ser-246, and Ser-252 each carry the phosphoserine modification.

Belongs to the borealin family. May form homooligomers and homodimers. Component of the chromosomal passenger complex (CPC) composed of at least BIRC5/survivin, CDCA8/borealin, INCENP, AURKB or AURKC; in the complex forms a triple-helix bundle-based subcomplex with INCENP and BIRC5. Interacts with SENP3, UBE2I and RANBP2. Interacts (phosphorylated) with SGO1 and SGO2; the association is dependent on CDK1. Phosphorylated by TTK, essentially at Thr-88 and Thr-94. Phosphorylation (probably by CDK1) promotes targeting of the CPC to centromeric DNA. Post-translationally, sumoylated by UBE2I and RANBP2. Desumoylated by SENP3 through the removal of SUMO2 and SUMO3. In terms of processing, citrullinated by PADI4.

The protein resides in the nucleus. It is found in the nucleolus. The protein localises to the cytoplasm. It localises to the chromosome. Its subcellular location is the centromere. The protein resides in the cytoskeleton. It is found in the spindle. Component of the chromosomal passenger complex (CPC), a complex that acts as a key regulator of mitosis. The CPC complex has essential functions at the centromere in ensuring correct chromosome alignment and segregation and is required for chromatin-induced microtubule stabilization and spindle assembly. In the complex, it may be required to direct the CPC to centromeric DNA. This Rattus norvegicus (Rat) protein is Borealin (Cdca8).